A 574-amino-acid polypeptide reads, in one-letter code: 3-hydroxy-3-methylglutaryl-coenzyme A reductase 3 (574 aa).

A disordered region spans residues 1–30 (MDVRRRPVKPLYPSEHISSGEPLKPHNQDS). Residues 41–61 (PLYLTNGLFFTMFFSVMYFLL) traverse the membrane as a helical segment. A glycan (N-linked (GlcNAc...) asparagine) is linked at Asn-78. Residues 83–103 (VAMVSLIASVIYLLGFFGIGF) traverse the membrane as a helical segment. The tract at residues 104–161 (VQSFVSKGNNDSWDVEDESPEQFIDRTVTPPPVRRNIPMKSVPVAEKTAQIITPFSSE) is linker. A glycan (N-linked (GlcNAc...) asparagine) is linked at Asn-113. The catalytic stretch occupies residues 162–574 (DDEVVIKSVV…YNRSCKDVTK (413 aa)). Glu-256 acts as the Charge relay system in catalysis. N-linked (GlcNAc...) asparagine glycosylation is present at Asn-320. The active-site Charge relay system is Lys-388. Residue Asn-433 is glycosylated (N-linked (GlcNAc...) asparagine). Asp-464 serves as the catalytic Charge relay system. Residue His-562 is the Proton donor of the active site. Asn-566 carries an N-linked (GlcNAc...) asparagine glycan.

Belongs to the HMG-CoA reductase family. As to expression, expressed in mature petals and anthers.

Its subcellular location is the endoplasmic reticulum membrane. It catalyses the reaction (R)-mevalonate + 2 NADP(+) + CoA = (3S)-3-hydroxy-3-methylglutaryl-CoA + 2 NADPH + 2 H(+). It participates in metabolic intermediate biosynthesis; (R)-mevalonate biosynthesis; (R)-mevalonate from acetyl-CoA: step 3/3. Functionally, catalyzes the synthesis of mevalonate. The specific precursor of all isoprenoid compounds present in plants. This Solanum tuberosum (Potato) protein is 3-hydroxy-3-methylglutaryl-coenzyme A reductase 3 (HMG3).